A 323-amino-acid polypeptide reads, in one-letter code: Ubiquinone biosynthesis protein COQ4, mitochondrial (323 aa).

Residues 1–29 (MLKSTVSNTRIKCCRIDQRRNYLFTALAS) constitute a mitochondrion transit peptide. Residues histidine 205, aspartate 206, histidine 209, and glutamate 221 each contribute to the Zn(2+) site.

It belongs to the COQ4 family. As to quaternary structure, component of a multi-subunit COQ enzyme complex, composed of at least COQ3, COQ4, COQ5, COQ6, COQ7 and COQ9. The cofactor is Zn(2+).

It localises to the mitochondrion inner membrane. It carries out the reaction a 4-hydroxy-3-methoxy-5-(all-trans-polyprenyl)benzoate + H(+) = a 2-methoxy-6-(all-trans-polyprenyl)phenol + CO2. It participates in cofactor biosynthesis; ubiquinone biosynthesis. Functionally, lyase that catalyzes the C1-decarboxylation of 4-hydroxy-3-methoxy-5-(all-trans-polyprenyl)benzoic acid into 2-methoxy-6-(all-trans-polyprenyl)phenol during ubiquinone biosynthesis. The polypeptide is Ubiquinone biosynthesis protein COQ4, mitochondrial (Candida dubliniensis (strain CD36 / ATCC MYA-646 / CBS 7987 / NCPF 3949 / NRRL Y-17841) (Yeast)).